Reading from the N-terminus, the 469-residue chain is tRNA modification GTPase MnmE (469 aa).

Residues Arg26, Glu88, and Arg127 each contribute to the (6S)-5-formyl-5,6,7,8-tetrahydrofolate site. A TrmE-type G domain is found at 222–390 (GLKVAIVGRP…LEDAILHLVQ (169 aa)). Asn232 is a binding site for K(+). GTP is bound by residues 232-237 (NVGKSS), 251-257 (TDLPGTT), 276-279 (DTAG), and 344-347 (NKAD). Position 236 (Ser236) interacts with Mg(2+). K(+) is bound by residues Thr251, Leu253, and Thr256. Thr257 contributes to the Mg(2+) binding site. Lys469 provides a ligand contact to (6S)-5-formyl-5,6,7,8-tetrahydrofolate.

This sequence belongs to the TRAFAC class TrmE-Era-EngA-EngB-Septin-like GTPase superfamily. TrmE GTPase family. In terms of assembly, homodimer. Heterotetramer of two MnmE and two MnmG subunits. The cofactor is K(+).

It localises to the cytoplasm. Functionally, exhibits a very high intrinsic GTPase hydrolysis rate. Involved in the addition of a carboxymethylaminomethyl (cmnm) group at the wobble position (U34) of certain tRNAs, forming tRNA-cmnm(5)s(2)U34. In Synechococcus elongatus, this protein is tRNA modification GTPase MnmE.